A 176-amino-acid polypeptide reads, in one-letter code: NAD(P)H-quinone oxidoreductase subunit 6, chloroplastic (176 aa).

Helical transmembrane passes span Phe10–Thr30, Pro32–Leu52, Ala61–Met81, Leu92–Ile112, and Phe152–Ala172.

It belongs to the complex I subunit 6 family. As to quaternary structure, NDH is composed of at least 16 different subunits, 5 of which are encoded in the nucleus.

The protein localises to the plastid. It is found in the chloroplast thylakoid membrane. It carries out the reaction a plastoquinone + NADH + (n+1) H(+)(in) = a plastoquinol + NAD(+) + n H(+)(out). The catalysed reaction is a plastoquinone + NADPH + (n+1) H(+)(in) = a plastoquinol + NADP(+) + n H(+)(out). NDH shuttles electrons from NAD(P)H:plastoquinone, via FMN and iron-sulfur (Fe-S) centers, to quinones in the photosynthetic chain and possibly in a chloroplast respiratory chain. The immediate electron acceptor for the enzyme in this species is believed to be plastoquinone. Couples the redox reaction to proton translocation, and thus conserves the redox energy in a proton gradient. This is NAD(P)H-quinone oxidoreductase subunit 6, chloroplastic (ndhG) from Oenothera argillicola (Appalachian evening primrose).